Reading from the N-terminus, the 429-residue chain is G2/mitotic-specific cyclin-B1 (429 aa).

A disordered region spans residues 71 to 114 (TGKVSAKIPPPKPLEKVPPVSEPEVELAETHEPEPVMDEKLSPE). At K73 the chain carries N6-acetyllysine. A compositionally biased stretch (basic and acidic residues) spans 98–112 (AETHEPEPVMDEKLS). S122 is modified (phosphoserine; by CDK1). S124 bears the Phosphoserine mark. Residue S129 is modified to Phosphoserine; by PLK1. Residue S143 is modified to Phosphoserine. 2 interaction with CDK2 regions span residues 165-173 (EYVKDIYAY) and 254-257 (YEEM). At T317 the chain carries Phosphothreonine.

Belongs to the cyclin family. Cyclin AB subfamily. In terms of assembly, interacts with the CDC2 protein kinase to form a serine/threonine kinase holoenzyme complex also known as maturation promoting factor (MPF). The cyclin subunit imparts substrate specificity to the complex. Binds HEI10. Interacts with catalytically active RALBP1 and CDC2 during mitosis to form an endocytotic complex during interphase. Interacts with CCNF; interaction is required for nuclear localization. Interacts with CDK5RAP3. Interacts with RFPL4A and UBE2A. Interacts with INCA1. Post-translationally, ubiquitinated by the SCF(NIPA) complex during interphase, leading to its destruction. Not ubiquitinated during G2/M phases. Phosphorylated by PLK1 at Ser-129 on centrosomes during prophase: phosphorylation by PLK1 does not cause nuclear import. Phosphorylation at Ser-143 was also reported to be mediated by PLK1 but Ser-129 seems to be the primary phosphorylation site.

It is found in the cytoplasm. Its subcellular location is the nucleus. It localises to the cytoskeleton. The protein localises to the microtubule organizing center. The protein resides in the centrosome. Its function is as follows. Essential for the control of the cell cycle at the G2/M (mitosis) transition. The polypeptide is G2/mitotic-specific cyclin-B1 (CCNB1) (Mesocricetus auratus (Golden hamster)).